The following is a 205-amino-acid chain: MTNIVWHQHPVDQAARAEQKGQNPVLLWFTGLSGAGKSTLAGALERALFEAGFHTYLLDGDNVRHGLCKDLGFTVEDRDENLRRVGEVAKLMVDAGLVVLSAFISPTREERDGIRARFPAGQFIEVHVSTPLSVCEQRDPKGLYVKARSGEISNFTGISSPYEAPLAAELTIDTSKGDLATQVRALIDYLTAINVINTDKTKTVA.

31 to 38 (GLSGAGKS) contacts ATP. Catalysis depends on Ser105, which acts as the Phosphoserine intermediate.

This sequence belongs to the APS kinase family.

It carries out the reaction adenosine 5'-phosphosulfate + ATP = 3'-phosphoadenylyl sulfate + ADP + H(+). The protein operates within sulfur metabolism; hydrogen sulfide biosynthesis; sulfite from sulfate: step 2/3. In terms of biological role, catalyzes the synthesis of activated sulfate. The protein is Adenylyl-sulfate kinase of Shewanella putrefaciens (strain CN-32 / ATCC BAA-453).